We begin with the raw amino-acid sequence, 62 residues long: Keratin-associated protein 8-1 (62 aa).

The segment at 12-53 (GCYWGSYGYPLGYSVGCGYGSTYSPVGYGFGYGYNGSGAFGC) is 12 X 2 AA repeats of G-[YCGS].

The protein belongs to the KRTAP type 8 family. As to quaternary structure, interacts with wool keratins. In terms of tissue distribution, wool.

Its function is as follows. In the wool cortex, wool keratin intermediate filaments are embedded in an interfilamentous matrix, consisting of hair keratin-associated proteins (KRTAP), which are essential for the formation of a rigid and resistant wool shaft through their extensive disulfide bond cross-linking with abundant cysteine residues of wool keratins. The matrix proteins include the high-sulfur and high-glycine-tyrosine keratins. This is Keratin-associated protein 8-1 (KRTAP8-1) from Ovis aries (Sheep).